Here is a 66-residue protein sequence, read N- to C-terminus: Large ribosomal subunit protein bL33c (66 aa).

The protein belongs to the bacterial ribosomal protein bL33 family.

It is found in the plastid. The protein resides in the chloroplast. The polypeptide is Large ribosomal subunit protein bL33c (Gossypium barbadense (Sea Island cotton)).